Consider the following 127-residue polypeptide: uncharacterized protein (127 aa).

This is an uncharacterized protein from Caenorhabditis elegans.